We begin with the raw amino-acid sequence, 784 residues long: Toll-like receptor 2 (784 aa).

The signal sequence occupies residues Met-1 to Gly-20. Topologically, residues Ala-21–Arg-587 are extracellular. Cys-30 and Cys-36 form a disulfide bridge. LRR repeat units lie at residues Val-54–Asn-77, Leu-78–Asn-101, Leu-102–Ala-125, Leu-126–Asn-150, Leu-151–Phe-175, Leu-176–Asn-199, Ile-200–Ser-223, Leu-224–Ser-250, Val-251–Gly-278, Ile-279–Asn-308, Val-309–Lys-337, Val-338–Ser-361, Leu-362–Phe-388, Leu-389–Asn-414, Leu-415–Lys-437, Met-438–Gln-457, Thr-458–Gln-478, Leu-479–Val-500, and Leu-501–Gln-524. Asn-114 carries an N-linked (GlcNAc...) asparagine glycan. Asn-199 is a glycosylation site (N-linked (GlcNAc...) asparagine). The N-linked (GlcNAc...) asparagine glycan is linked to Asn-248. Cys-353 and Cys-382 are joined by a disulfide. Cys-432 and Cys-454 form a disulfide bridge. Asn-442 carries N-linked (GlcNAc...) asparagine glycosylation. Residues Leu-525–Arg-579 enclose the LRRCT domain. The helical transmembrane segment at Ala-588–Leu-608 threads the bilayer. Over Cys-609–Ser-784 the chain is Cytoplasmic. A TIR domain is found at Ile-639–Ile-782. A Glycyl lysine isopeptide (Lys-Gly) (interchain with G-Cter in ubiquitin) cross-link involves residue Lys-754. The ATG16L1-binding motif motif lies at Tyr-761 to Leu-778.

It belongs to the Toll-like receptor family. In terms of assembly, interacts with LY96, TLR1 and TLR6 (via extracellular domain). TLR2 seems to exist in heterodimers with either TLR1 or TLR6 before stimulation by the ligand. The heterodimers form bigger oligomers in response to their corresponding ligands as well as further heterotypic associations with other receptors such as CD14 and/or CD36. Binds MYD88 (via TIR domain). Interacts with TICAM1. Interacts with CNPY3. Interacts with ATG16L1. Interacts with PPP1R11. Interacts with TICAM2. Interacts with TIRAP. In terms of processing, ubiquitinated at Lys-754 by PPP1R11, leading to its degradation. Deubiquitinated by USP2. Post-translationally, glycosylation of Asn-442 is critical for secretion of the N-terminal ectodomain of TLR2.

It localises to the membrane. The protein localises to the cytoplasmic vesicle. It is found in the phagosome membrane. Its subcellular location is the membrane raft. Cooperates with LY96 to mediate the innate immune response to bacterial lipoproteins and other microbial cell wall components. Cooperates with TLR1 or TLR6 to mediate the innate immune response to bacterial lipoproteins or lipopeptides. Acts via MYD88 and TRAF6, leading to NF-kappa-B activation, cytokine secretion and the inflammatory response. May also promote apoptosis in response to lipoproteins. Forms activation clusters composed of several receptors depending on the ligand, these clusters trigger signaling from the cell surface and subsequently are targeted to the Golgi in a lipid-raft dependent pathway. Forms the cluster TLR2:TLR6:CD14:CD36 in response to diacylated lipopeptides and TLR2:TLR1:CD14 in response to triacylated lipopeptides. The sequence is that of Toll-like receptor 2 (TLR2) from Bubalus bubalis (Domestic water buffalo).